Consider the following 166-residue polypeptide: Large ribosomal subunit protein uL10 (166 aa).

It belongs to the universal ribosomal protein uL10 family. As to quaternary structure, part of the ribosomal stalk of the 50S ribosomal subunit. The N-terminus interacts with L11 and the large rRNA to form the base of the stalk. The C-terminus forms an elongated spine to which L12 dimers bind in a sequential fashion forming a multimeric L10(L12)X complex.

Forms part of the ribosomal stalk, playing a central role in the interaction of the ribosome with GTP-bound translation factors. This Bacillus pumilus (strain SAFR-032) protein is Large ribosomal subunit protein uL10.